Here is a 129-residue protein sequence, read N- to C-terminus: Small ribosomal subunit protein uS11c (129 aa).

It belongs to the universal ribosomal protein uS11 family. Part of the 30S ribosomal subunit.

Its subcellular location is the plastid. It localises to the chloroplast. The chain is Small ribosomal subunit protein uS11c from Euglena gracilis.